Reading from the N-terminus, the 171-residue chain is S-ribosylhomocysteine lyase (171 aa).

Fe cation contacts are provided by His54, His58, and Cys128.

The protein belongs to the LuxS family. In terms of assembly, homodimer. It depends on Fe cation as a cofactor.

The enzyme catalyses S-(5-deoxy-D-ribos-5-yl)-L-homocysteine = (S)-4,5-dihydroxypentane-2,3-dione + L-homocysteine. In terms of biological role, involved in the synthesis of autoinducer 2 (AI-2) which is secreted by bacteria and is used to communicate both the cell density and the metabolic potential of the environment. The regulation of gene expression in response to changes in cell density is called quorum sensing. Catalyzes the transformation of S-ribosylhomocysteine (RHC) to homocysteine (HC) and 4,5-dihydroxy-2,3-pentadione (DPD). The sequence is that of S-ribosylhomocysteine lyase from Salmonella agona (strain SL483).